The chain runs to 276 residues: Small ribosomal subunit protein uS2 (276 aa).

The disordered stretch occupies residues 254-276; sequence LAGATAAAPAEGAVATETTPTEG. Residues 255–276 are compositionally biased toward low complexity; sequence AGATAAAPAEGAVATETTPTEG.

It belongs to the universal ribosomal protein uS2 family.

This is Small ribosomal subunit protein uS2 from Mycobacterium ulcerans (strain Agy99).